We begin with the raw amino-acid sequence, 451 residues long: Tubulin alpha chain (451 aa).

Residues methionine 1–cysteine 4 carry the MREC motif motif. Glutamine 11 contacts GTP. The residue at position 40 (lysine 40) is an N6-acetyllysine. GTP contacts are provided by glutamate 71, serine 140, glycine 144, threonine 145, threonine 179, asparagine 206, and asparagine 228. Glutamate 71 lines the Mg(2+) pocket. Residue glutamate 254 is part of the active site. The tract at residues tyrosine 432 to tyrosine 451 is disordered. At glutamate 445 the chain carries 5-glutamyl polyglutamate.

It belongs to the tubulin family. As to quaternary structure, dimer of alpha and beta chains. A typical microtubule is a hollow water-filled tube with an outer diameter of 25 nm and an inner diameter of 15 nM. Alpha-beta heterodimers associate head-to-tail to form protofilaments running lengthwise along the microtubule wall with the beta-tubulin subunit facing the microtubule plus end conferring a structural polarity. Microtubules usually have 13 protofilaments but different protofilament numbers can be found in some organisms and specialized cells. Mg(2+) serves as cofactor. Some glutamate residues at the C-terminus are polyglycylated, resulting in polyglycine chains on the gamma-carboxyl group. Glycylation is mainly limited to tubulin incorporated into axonemes (cilia and flagella) whereas glutamylation is prevalent in neuronal cells, centrioles, axonemes, and the mitotic spindle. Both modifications can coexist on the same protein on adjacent residues, and lowering polyglycylation levels increases polyglutamylation, and reciprocally. The precise function of polyglycylation is still unclear. Post-translationally, some glutamate residues at the C-terminus are polyglutamylated, resulting in polyglutamate chains on the gamma-carboxyl group. Polyglutamylation plays a key role in microtubule severing by spastin (SPAST). SPAST preferentially recognizes and acts on microtubules decorated with short polyglutamate tails: severing activity by SPAST increases as the number of glutamates per tubulin rises from one to eight, but decreases beyond this glutamylation threshold. In terms of processing, acetylation of alpha chains at Lys-40 is located inside the microtubule lumen. This modification has been correlated with increased microtubule stability, intracellular transport and ciliary assembly. Undergoes a tyrosination/detyrosination cycle, the cyclic removal and re-addition of a C-terminal tyrosine residue by the enzymes tubulin tyrosine carboxypeptidase (MATCAP, VASH1 or VASH2) and tubulin tyrosine ligase (TTL), respectively. Post-translationally, tyrosination promotes microtubule interaction with CAP-Gly microtubule plus-end tracking proteins. Tyrosinated tubulins regulate the initiation of dynein-driven motility. In terms of processing, detyrosination is involved in metaphase plate congression by guiding chromosomes during mitosis. Detyrosination increases microtubules-dependent mechanotransduction in dystrophic cardiac and skeletal muscle. In cardiomyocytes, detyrosinated microtubules are required to resist to contractile compression during contraction.

Its subcellular location is the cytoplasm. The protein localises to the cytoskeleton. It catalyses the reaction GTP + H2O = GDP + phosphate + H(+). Its function is as follows. Tubulin is the major constituent of microtubules, a cylinder consisting of laterally associated linear protofilaments composed of alpha- and beta-tubulin heterodimers. Microtubules grow by the addition of GTP-tubulin dimers to the microtubule end, where a stabilizing cap forms. Below the cap, tubulin dimers are in GDP-bound state, owing to GTPase activity of alpha-tubulin. This Torpedo marmorata (Marbled electric ray) protein is Tubulin alpha chain.